The chain runs to 248 residues: Sugar fermentation stimulation protein homolog (248 aa).

The protein belongs to the SfsA family.

The protein is Sugar fermentation stimulation protein homolog of Methylorubrum extorquens (strain CM4 / NCIMB 13688) (Methylobacterium extorquens).